Here is a 982-residue protein sequence, read N- to C-terminus: Glycine dehydrogenase (decarboxylating) (982 aa).

Lys721 bears the N6-(pyridoxal phosphate)lysine mark.

It belongs to the GcvP family. The glycine cleavage system is composed of four proteins: P, T, L and H. It depends on pyridoxal 5'-phosphate as a cofactor.

The enzyme catalyses N(6)-[(R)-lipoyl]-L-lysyl-[glycine-cleavage complex H protein] + glycine + H(+) = N(6)-[(R)-S(8)-aminomethyldihydrolipoyl]-L-lysyl-[glycine-cleavage complex H protein] + CO2. Its function is as follows. The glycine cleavage system catalyzes the degradation of glycine. The P protein binds the alpha-amino group of glycine through its pyridoxal phosphate cofactor; CO(2) is released and the remaining methylamine moiety is then transferred to the lipoamide cofactor of the H protein. The protein is Glycine dehydrogenase (decarboxylating) of Prochlorococcus marinus (strain MIT 9303).